A 444-amino-acid chain; its full sequence is Serine carboxypeptidase 2 (444 aa).

Asn60–Gly62 provides a ligand contact to substrate. Cystine bridges form between Cys65–Cys324, Cys222–Cys234, and Cys258–Cys291. N-linked (GlcNAc...) asparagine glycans are attached at residues Asn116 and Asn127. Glu157–Tyr159 lines the substrate pocket. The active site involves Ser158. Asn259 is a glycosylation site (N-linked (GlcNAc...) asparagine). Positions Ile260–Gly286 are cleaved as a propeptide — linker peptide. 2 N-linked (GlcNAc...) asparagine glycosylation sites follow: Asn312 and Asn318. Catalysis depends on residues Asp361 and His413. A substrate-binding site is contributed by Arg409–His413.

The protein belongs to the peptidase S10 family. In terms of assembly, carboxypeptidase II is a dimer, where each monomer is composed of two chains linked by a disulfide bond. In terms of processing, N-glycosylated.

The enzyme catalyses Preferential release of a C-terminal arginine or lysine residue.. This chain is Serine carboxypeptidase 2 (CBP2), found in Triticum aestivum (Wheat).